The following is a 481-amino-acid chain: Replication factor C large subunit (481 aa).

43-50 (GKPGIGKT) serves as a coordination point for ATP. 2 stretches are compositionally biased toward basic and acidic residues: residues 408–433 (KVEREKEPEPKKKGRKKAESPAKDAD) and 441–457 (VPKEELPVKSAPEERPA). Positions 408-481 (KVEREKEPEP…HNQSTLFDGF (74 aa)) are disordered. The segment covering 471-481 (AHNQSTLFDGF) has biased composition (polar residues).

This sequence belongs to the activator 1 small subunits family. RfcL subfamily. As to quaternary structure, heteromultimer composed of small subunits (RfcS) and large subunits (RfcL).

In terms of biological role, part of the RFC clamp loader complex which loads the PCNA sliding clamp onto DNA. The sequence is that of Replication factor C large subunit from Methanoregula boonei (strain DSM 21154 / JCM 14090 / 6A8).